The primary structure comprises 299 residues: Probable lipid kinase YegS (299 aa).

The region spanning 2–133 is the DAGKc domain; sequence AEFPASLLIL…IDMAQVNKQT (132 aa). Residues Thr-40, 66–72, and Thr-95 contribute to the ATP site; that span reads GDGTINE. Mg(2+) contacts are provided by Leu-215, Asp-218, and Leu-220. Glu-271 serves as the catalytic Proton acceptor.

It belongs to the diacylglycerol/lipid kinase family. YegS lipid kinase subfamily. The cofactor is Mg(2+). Requires Ca(2+) as cofactor.

The protein resides in the cytoplasm. Probably phosphorylates lipids; the in vivo substrate is unknown. The polypeptide is Probable lipid kinase YegS (Escherichia coli (strain 55989 / EAEC)).